A 228-amino-acid chain; its full sequence is Sec-independent protein translocase protein TatB (228 aa).

The chain crosses the membrane as a helical span at residues 1–21 (MFDFGLGELIFVGIIALIVLG). Disordered stretches follow at residues 106–164 (TPAD…TDKD) and 196–228 (VPHT…VRKS). Residues 135–151 (PSERSDTSAETLGDDRQ) are compositionally biased toward basic and acidic residues. Over residues 206 to 228 (AINRKRDFRPKHRAKPKLRVRKS) the composition is skewed to basic residues.

The protein belongs to the TatB family. In terms of assembly, the Tat system comprises two distinct complexes: a TatABC complex, containing multiple copies of TatA, TatB and TatC subunits, and a separate TatA complex, containing only TatA subunits. Substrates initially bind to the TatABC complex, which probably triggers association of the separate TatA complex to form the active translocon.

Its subcellular location is the cell inner membrane. Functionally, part of the twin-arginine translocation (Tat) system that transports large folded proteins containing a characteristic twin-arginine motif in their signal peptide across membranes. Together with TatC, TatB is part of a receptor directly interacting with Tat signal peptides. TatB may form an oligomeric binding site that transiently accommodates folded Tat precursor proteins before their translocation. The protein is Sec-independent protein translocase protein TatB of Neisseria gonorrhoeae (strain ATCC 700825 / FA 1090).